The chain runs to 612 residues: Methionine--tRNA ligase (612 aa).

A 'HIGH' region motif is present at residues 12 to 22 (PYANGPRHIGH). Residues Cys-144, Cys-147, Cys-157, and Cys-160 each contribute to the Zn(2+) site. A 'KMSKS' region motif is present at residues 348–352 (KFSSS). Residue Ser-351 participates in ATP binding.

The protein belongs to the class-I aminoacyl-tRNA synthetase family. MetG type 1 subfamily. In terms of assembly, monomer. Requires Zn(2+) as cofactor.

It is found in the cytoplasm. It carries out the reaction tRNA(Met) + L-methionine + ATP = L-methionyl-tRNA(Met) + AMP + diphosphate. Functionally, is required not only for elongation of protein synthesis but also for the initiation of all mRNA translation through initiator tRNA(fMet) aminoacylation. The chain is Methionine--tRNA ligase from Corynebacterium kroppenstedtii (strain DSM 44385 / JCM 11950 / CIP 105744 / CCUG 35717).